A 50-amino-acid polypeptide reads, in one-letter code: Inducible serine protease inhibitor 1 (50 aa).

The segment at 1 to 27 (DLVXGTNFXKNNPXSTRVAANSXRSPS) is disordered. Residues 8–25 (FXKNNPXSTRVAANSXRS) are compositionally biased toward polar residues.

Inhibits trypsin and the toxin protease PR2 of M.anisopliae. Does not inhibit chymotrypsin, subtilisin Carlsberg, proteinase K, porcine pancreatic elastase and the toxin protease PR1 of M.anisopliae. The polypeptide is Inducible serine protease inhibitor 1 (Galleria mellonella (Greater wax moth)).